Here is a 66-residue protein sequence, read N- to C-terminus: KEGYIVNLSTGCKYECYKLGDNDYCLRECKQQYGKGAGGYCYAFGCWCTHLYEQAVVWPLPKKTCT.

Positions 1 to 66 constitute an LCN-type CS-alpha/beta domain; it reads KEGYIVNLST…VWPLPKKTCT (66 aa). Cystine bridges form between C12-C65, C16-C41, C25-C46, and C29-C48. Threonine amide is present on T66.

The protein belongs to the long (4 C-C) scorpion toxin superfamily. Sodium channel inhibitor family. Beta subfamily. Expressed by the venom gland.

It is found in the secreted. In terms of biological role, beta toxins bind voltage-independently at site-4 of sodium channels (Nav) and shift the voltage of activation toward more negative potentials thereby affecting sodium channel activation and promoting spontaneous and repetitive firing. The polypeptide is Beta-toxin Cll1m (Centruroides limpidus (Mexican scorpion)).